The primary structure comprises 153 residues: 6,7-dimethyl-8-ribityllumazine synthase (153 aa).

5-amino-6-(D-ribitylamino)uracil is bound by residues Phe22, 56–58 (AFE), and 80–82 (AVI). Residue 85 to 86 (AT) coordinates (2S)-2-hydroxy-3-oxobutyl phosphate. The active-site Proton donor is His88. Phe113 contacts 5-amino-6-(D-ribitylamino)uracil. Position 127 (Arg127) interacts with (2S)-2-hydroxy-3-oxobutyl phosphate.

The protein belongs to the DMRL synthase family.

The catalysed reaction is (2S)-2-hydroxy-3-oxobutyl phosphate + 5-amino-6-(D-ribitylamino)uracil = 6,7-dimethyl-8-(1-D-ribityl)lumazine + phosphate + 2 H2O + H(+). It participates in cofactor biosynthesis; riboflavin biosynthesis; riboflavin from 2-hydroxy-3-oxobutyl phosphate and 5-amino-6-(D-ribitylamino)uracil: step 1/2. Catalyzes the formation of 6,7-dimethyl-8-ribityllumazine by condensation of 5-amino-6-(D-ribitylamino)uracil with 3,4-dihydroxy-2-butanone 4-phosphate. This is the penultimate step in the biosynthesis of riboflavin. The chain is 6,7-dimethyl-8-ribityllumazine synthase from Alkaliphilus metalliredigens (strain QYMF).